The chain runs to 552 residues: Cytochrome P450 monooxyhenase eriI (552 aa).

The helical transmembrane segment at 9–26 (FALKASAAVAVLLLAAWV) threads the bilayer. N-linked (GlcNAc...) asparagine glycosylation is found at asparagine 50 and asparagine 447. Cysteine 495 contacts heme.

This sequence belongs to the cytochrome P450 family. It depends on heme as a cofactor.

Its subcellular location is the membrane. The enzyme catalyses (-)-cyatha-3,12-diene + reduced [NADPH--hemoprotein reductase] + O2 = erinacol + oxidized [NADPH--hemoprotein reductase] + H2O + H(+). It participates in secondary metabolite biosynthesis. Functionally, cytochrome P450 monooxygenase; part of the gene cluster that mediates the biosynthesis of erinacines, cyathane-xylosides that show unique biological activities, including leishmanicidal activity, stimulating activity for nerve growth-factor synthesis, and agonistic activity toward the kappa opioid receptor. Within the pathway, eriI hydroxylates cyatha-3,12-diene at C-14 of the seven-membered ring to yield erinacol. The first step of the erinacines biosynthesis pathway is catalyzed by the geranylgeranyl diphosphate (GGPP) synthase eriE via conversion of farnesyl pyrophosphate and isopentyl pyrophosphate into geranylgeranyl pyrophosphate (GGPP). GGPP is then substrate of the diterpene cyclase eriG for the production of cyatha-3,12-diene. The cytochrome P450 monooxygenase eriI then hydroxylates cyatha-3,12-diene at C-14 of the seven-membered ring to produce erinacol, which is further hydroxylated at C-15 by the cytochrome P450 monooxygenase eriC to yield cyathadiol. The cytochrome P450 monooxygenase eriA then catalyzes C-11 hydroxylation in the presence of the short chain dehydrogenase/reductase (SDR) eriH, which leads to the production of cyathatriol. The acetyltransferase eriL converts cyathatriol into 11-O-acetyl-cyathatriol. The SDR eriH catalyzes further oxidation of 11-O-acetyl-cyathatriol into 1-O-acetylcyathin A3. Finally, the glycosyl transferase eriJ tranfers xylose from UDP-xylose onto C-14 of 11-O-acetyl-cyathatriol to form eracine Q. EriJ is also able to convert 11-O-acetyl-cyathatriol to eracine Q2 by using UDP-D-glucose as cosubstrate, but at a lower rate. Its function is as follows. Cytochrome P450 monooxygenase; part of the gene cluster that mediates the biosynthesis of erinacines, cyathane-xylosides that show unique biological activities, including leishmanicidal activity, stimulating activity for nerve growth-factor synthesis, and agonistic activity toward the kappa opioid receptor. The geranylgeranyl diphosphate (GGPP) synthase eriE catalyzes the first step in erinacines biosynthesis via conversion of farnesyl pyrophosphate and isopentyl pyrophosphate into geranylgeranyl pyrophosphate (GGPP). GGPP is then substrate of the diterpene cyclase eriG for the production of cyatha-3,12-diene. EriG is unable to use geranyl diphosphate (GPP) or farnesyl diphosphate (FPP) as substrates. The cytochrome P450 monooxygenase eriI then hydroxylates cyatha-3,12-diene at C-14 of the seven-membered ring to produce erinacol, which is further hydroxylated at C-15 by the cytochrome P450 monooxygenase eriC to yield cyathadiol. The cytochrome P450 monooxygenase eriA then catalyzes C-11 hydroxylation in the presence of the short chain dehydrogenase/reductase (SDR) eriH, which leads to the production of cyathatriol. The acetyltransferase eriL converts cyathatriol into 11-O-acetyl-cyathatriol. The SDR eriH catalyzes further oxidation of 11-O-acetyl-cyathatriol into 1-O-acetylcyathin A3. Finally, the glycosyl transferase eriJ tranfers xylose from UDP-xylose onto C-14 of 11-O-acetyl-cyathatriol to form eracine Q. EriJ is also able to convert 11-O-acetyl-cyathatriol to eracine Q2 by using UDP-D-glucose as cosubstrate, but at a lower rate. In the absence of eriL and eriJ, the SDR eriH is able to convert cyathatriol to cyathin A3; this is likely a switching mechanism in the biosynthesis of cyathins (C-14 ketogroup)and erinacines (C-14 glycosylated group). The roles of the SDR eriB, the polyprenyl transferase eriF and the dehydrogenase eriK have still to be identified. The chain is Cytochrome P450 monooxyhenase eriI from Hericium erinaceus (Lion's mane mushroom).